Here is a 369-residue protein sequence, read N- to C-terminus: Flagellar P-ring protein (369 aa).

The first 23 residues, 1-23 (MRIASFFTVLLTLLTLNIAPASA), serve as a signal peptide directing secretion.

Belongs to the FlgI family. In terms of assembly, the basal body constitutes a major portion of the flagellar organelle and consists of four rings (L,P,S, and M) mounted on a central rod.

The protein resides in the periplasm. It is found in the bacterial flagellum basal body. In terms of biological role, assembles around the rod to form the L-ring and probably protects the motor/basal body from shearing forces during rotation. In Pectobacterium carotovorum subsp. carotovorum (strain PC1), this protein is Flagellar P-ring protein.